A 645-amino-acid polypeptide reads, in one-letter code: Lipase 1 (645 aa).

The first 24 residues, 1–24, serve as a signal peptide directing secretion; the sequence is MKRSFIFAPGMLALSISAISNAHA. The active-site Nucleophile is the S34. Active-site residues include D327 and H330. The region spanning 383–645 is the Autotransporter domain; that stretch reads NEQGKLGVFG…SFSLGVNASF (263 aa).

It belongs to the 'GDSL' lipolytic enzyme family.

Its subcellular location is the secreted. It carries out the reaction a triacylglycerol + H2O = a diacylglycerol + a fatty acid + H(+). The protein is Lipase 1 (lip-1) of Photorhabdus luminescens (Xenorhabdus luminescens).